The primary structure comprises 350 residues: Secreted effector protein PipB2 (350 aa).

4 Pentapeptide repeat domains span residues 162–201 (ANLT…NLSG), 202–241 (TSLG…SLLG), 247–286 (CNCS…IMED), and 287–326 (AVLT…TLTH).

In terms of assembly, interacts with the host kinesin light chain (KLC), a subunit of the kinesin-1 motor complex.

The protein localises to the secreted. Its subcellular location is the host membrane. In terms of biological role, effector proteins function to alter host cell physiology and promote bacterial survival in host tissues. Involved in the reorganization of late endosome/lysosome (LE/Lys) compartments in mammalian cells. Necessary and sufficient to link kinesin-1 onto the Salmonella-containing vacuole (SCV) membrane. Required for centrifugal extension of lysosomal glycoprotein-rich membrane tubules, known as Salmonella-induced filaments (Sifs), away from the SCV and toward the cell periphery. Required for virulence, but not for intracellular survival and replication in phagocytic cells. This chain is Secreted effector protein PipB2 (pipB2), found in Salmonella paratyphi A (strain ATCC 9150 / SARB42).